A 307-amino-acid polypeptide reads, in one-letter code: GTPase Era (307 aa).

The 175-residue stretch at 7-181 (RCGWVALMGP…VELIRKKLPK (175 aa)) folds into the Era-type G domain. Residues 15 to 22 (GPPNAGKS) are G1. 15 to 22 (GPPNAGKS) contributes to the GTP binding site. A G2 region spans residues 41–45 (QTTRN). The segment at 62–65 (DTPG) is G3. GTP-binding positions include 62-66 (DTPGL) and 130-133 (NKVD). Residues 130–133 (NKVD) form a G4 region. The tract at residues 160-162 (ISA) is G5. The 79-residue stretch at 212 to 290 (LRQEVPYSVA…HLELWVKVRE (79 aa)) folds into the KH type-2 domain.

This sequence belongs to the TRAFAC class TrmE-Era-EngA-EngB-Septin-like GTPase superfamily. Era GTPase family. In terms of assembly, monomer.

It is found in the cytoplasm. The protein localises to the cell inner membrane. Functionally, an essential GTPase that binds both GDP and GTP, with rapid nucleotide exchange. Plays a role in 16S rRNA processing and 30S ribosomal subunit biogenesis and possibly also in cell cycle regulation and energy metabolism. In Desulfovibrio desulfuricans (strain ATCC 27774 / DSM 6949 / MB), this protein is GTPase Era.